Reading from the N-terminus, the 395-residue chain is MAISSNLLLCLSLFIFIITKSALAQKCSNYKFSTNRLFESCNDLPVLDSFLHYTYDSSSGNLQIAYRHTKLTPGKWVAWAVNPTSTGMVGAQAIVAYPQSDGTVRAYTSPISSYQTSLLEAELSFNVSQLSATYQNNEMVIYAILNLPLANGGIINTVWQDGSLSGNNPLPHPTSGNNVRSVSTLNLVSGASGSTSTGAGGASKLRKRNIHGILNGVSWGIMMPIGAIIARYLKVSKSADPAWFYLHVFCQSSAYIIGVAGWATGLKLGNESAGIQFTFHRAVGIALFCLATIQVFAMFLRPKPEHKYRVYWNIYHHTVGYSVIILAVVNVFKGLDILSPEKQWRNAYTAIIVVLGIVAVVLEGFTWYVVIKRGKAEASAKTSQRVGNDGRSLYV.

An N-terminal signal peptide occupies residues 1–24; it reads MAISSNLLLCLSLFIFIITKSALA. A DOMON domain is found at 47–162; sequence LDSFLHYTYD…GIINTVWQDG (116 aa). One can recognise a Cytochrome b561 domain in the interval 176-371; it reads GNNVRSVSTL…LEGFTWYVVI (196 aa). 2 consecutive transmembrane segments (helical) span residues 210–230 and 242–262; these read IHGILNGVSWGIMMPIGAIIA and AWFYLHVFCQSSAYIIGVAGW. 3 residues coordinate heme b: H211, H247, and H280. A helical transmembrane segment spans residues 282–302; sequence AVGIALFCLATIQVFAMFLRP. A heme b-binding site is contributed by H316. 2 helical membrane passes run 318–338 and 351–371; these read TVGYSVIILAVVNVFKGLDIL and IIVVLGIVAVVLEGFTWYVVI.

Heme b serves as cofactor.

The protein localises to the membrane. Functionally, may act as a catecholamine-responsive trans-membrane electron transporter. The protein is Cytochrome b561 and DOMON domain-containing protein At5g47530 of Arabidopsis thaliana (Mouse-ear cress).